Consider the following 349-residue polypeptide: ATPase GET3 (349 aa).

Residue 26–33 (KGGVGKTT) coordinates ATP. The active site involves aspartate 57. Residues glutamate 242 and asparagine 269 each contribute to the ATP site. Cysteine 281 and cysteine 284 together coordinate Zn(2+).

The protein belongs to the arsA ATPase family. As to quaternary structure, homodimer. Component of the Golgi to ER traffic (GET) complex, which is composed of GET1, GET2 and GET3. Within the complex, GET1 and GET2 form a heterotetramer which is stabilized by phosphatidylinositol binding and which binds to the GET3 homodimer. Interacts with the chloride channel protein GEF1.

It localises to the cytoplasm. Its subcellular location is the endoplasmic reticulum. The protein resides in the golgi apparatus. In terms of biological role, ATPase required for the post-translational delivery of tail-anchored (TA) proteins to the endoplasmic reticulum. Recognizes and selectively binds the transmembrane domain of TA proteins in the cytosol. This complex then targets to the endoplasmic reticulum by membrane-bound receptors GET1 and GET2, where the tail-anchored protein is released for insertion. This process is regulated by ATP binding and hydrolysis. ATP binding drives the homodimer towards the closed dimer state, facilitating recognition of newly synthesized TA membrane proteins. ATP hydrolysis is required for insertion. Subsequently, the homodimer reverts towards the open dimer state, lowering its affinity for the GET1-GET2 receptor, and returning it to the cytosol to initiate a new round of targeting. Cooperates with the HDEL receptor ERD2 to mediate the ATP-dependent retrieval of resident ER proteins that contain a C-terminal H-D-E-L retention signal from the Golgi to the ER. Involved in low-level resistance to the oxyanions arsenite and arsenate, and in heat tolerance. This chain is ATPase GET3, found in Candida tropicalis (strain ATCC MYA-3404 / T1) (Yeast).